The chain runs to 173 residues: NADH-ubiquinone oxidoreductase chain 6 (173 aa).

Transmembrane regions (helical) follow at residues 24-44 (AMGL…GMFV), 47-67 (FWFS…LFIY), 81-101 (MKLF…SFFF), and 142-162 (LITL…VKIT).

The protein belongs to the complex I subunit 6 family.

The protein resides in the mitochondrion membrane. It carries out the reaction a ubiquinone + NADH + 5 H(+)(in) = a ubiquinol + NAD(+) + 4 H(+)(out). In terms of biological role, core subunit of the mitochondrial membrane respiratory chain NADH dehydrogenase (Complex I) that is believed to belong to the minimal assembly required for catalysis. Complex I functions in the transfer of electrons from NADH to the respiratory chain. The immediate electron acceptor for the enzyme is believed to be ubiquinone. This chain is NADH-ubiquinone oxidoreductase chain 6, found in Aedes aegypti (Yellowfever mosquito).